The sequence spans 322 residues: Thioredoxin reductase (322 aa).

FAD is bound by residues 11–14, 40–41, Q45, N54, V87, and C145; these read SGPA and IA. C142 and C145 are joined by a disulfide. S192 is modified (phosphoserine). T278 carries the phosphothreonine modification. S279 bears the Phosphoserine mark. FAD is bound by residues D288 and 295 to 297; that span reads RQA.

It belongs to the class-II pyridine nucleotide-disulfide oxidoreductase family. In terms of assembly, homodimer. Requires FAD as cofactor.

The protein resides in the cytoplasm. The enzyme catalyses [thioredoxin]-dithiol + NADP(+) = [thioredoxin]-disulfide + NADPH + H(+). The chain is Thioredoxin reductase (trr1) from Schizosaccharomyces pombe (strain 972 / ATCC 24843) (Fission yeast).